The chain runs to 435 residues: Hydrogenobyrinate a,c-diamide synthase (435 aa).

Residues 247–435 (RIALARDAAF…TGSFFHLIAG (189 aa)) form the GATase cobBQ-type domain. Catalysis depends on C329, which acts as the Nucleophile.

The protein belongs to the CobB/CbiA family. Requires Mg(2+) as cofactor.

It catalyses the reaction hydrogenobyrinate + 2 L-glutamine + 2 ATP + 2 H2O = hydrogenobyrinate a,c-diamide + 2 L-glutamate + 2 ADP + 2 phosphate + 2 H(+). The protein operates within cofactor biosynthesis; adenosylcobalamin biosynthesis; cob(II)yrinate a,c-diamide from precorrin-2 (aerobic route): step 9/10. Catalyzes the ATP-dependent amidation of the two carboxylate groups at positions a and c of hydrogenobyrinate, using either L-glutamine or ammonia as the nitrogen source. In Rhodobacter capsulatus (strain ATCC BAA-309 / NBRC 16581 / SB1003), this protein is Hydrogenobyrinate a,c-diamide synthase.